The chain runs to 376 residues: 26S proteasome non-ATPase regulatory subunit 13 (376 aa).

Residues 171-338 form the PCI domain; that stretch reads SYYKDALRFL…KRVHMTWVQP (168 aa).

As to quaternary structure, component of the 19S proteasome regulatory particle complex. The 26S proteasome consists of a 20S core particle (CP) and two 19S regulatory subunits (RP). The regulatory particle is made of a lid composed of 9 subunits including PSMD13, a base containing 6 ATPases and few additional components.

Functionally, component of the 26S proteasome, a multiprotein complex involved in the ATP-dependent degradation of ubiquitinated proteins. This complex plays a key role in the maintenance of protein homeostasis by removing misfolded or damaged proteins, which could impair cellular functions, and by removing proteins whose functions are no longer required. Therefore, the proteasome participates in numerous cellular processes, including cell cycle progression, apoptosis, or DNA damage repair. The chain is 26S proteasome non-ATPase regulatory subunit 13 from Gallus gallus (Chicken).